A 375-amino-acid polypeptide reads, in one-letter code: Protein HrmA (375 aa).

Unknown. May serve a regulatory function. The polypeptide is Protein HrmA (hrmA) (Pseudomonas syringae pv. syringae).